The primary structure comprises 94 residues: Large ribosomal subunit protein bL27 (94 aa).

Residues 1-9 (MNLANLQLF) constitute a propeptide that is removed on maturation. The tract at residues 11 to 34 (HKKGGGSTSNGRDSQAKRLGAKAA) is disordered.

Belongs to the bacterial ribosomal protein bL27 family. The N-terminus is cleaved by ribosomal processing cysteine protease Prp.

The protein is Large ribosomal subunit protein bL27 of Streptococcus pyogenes serotype M3 (strain ATCC BAA-595 / MGAS315).